Consider the following 337-residue polypeptide: WAT1-related protein At1g11460 (337 aa).

10 helical membrane passes run W14–V34, I46–L66, F83–Y103, T107–L127, A139–F159, W188–F208, F220–Y240, F254–V274, V284–I304, and L309–W329. Positions M27–L157 constitute an EamA 1 domain. Positions F220–L328 constitute an EamA 2 domain.

It belongs to the drug/metabolite transporter (DMT) superfamily. Plant drug/metabolite exporter (P-DME) (TC 2.A.7.4) family.

The protein resides in the membrane. The protein is WAT1-related protein At1g11460 of Arabidopsis thaliana (Mouse-ear cress).